Here is a 750-residue protein sequence, read N- to C-terminus: MIIRSPEPEVKILVDRDPVKTSFEEWAKPGHFSRTIAKGPDTTTWIWNLHADAHDFDSHTSDLEEISRKVFSAHFGQLSIIFLWLSGMYFHGARFSNYEAWLSDPTHIGPSAQVVWPIVGQEILNGDVGGGFRGIQITSGFFQIWRASGITNELQLYCTAIGALIFAALMLFAGWFHYHKAAPKLAWFQDVESMLNHHLAGLLGLGSLSWAGHQVHVSLPINQFLNAGVDPKEIPLPHEFILNRDLLAQLYPSFAEGATPFFTLNWSKYAEFLTFRGGLDPVTGGLWLTDIAHHHLAIAILFLIAGHMYRTNWGIGHGLKDILEAHKGPFTGQGHKGLYEILTTSWHAQLSLNLAMLGSLTIVVAHHMYSMPPYPYLATDYGTQLSLFTHHMWIGGFLIVGAAAHAAIFMVRDYDPTTRYNDLLDRVLRHRDAIISHLNWACIFLGFHSFGLYIHNDTMSALGRPQDMFSDTAIQLQPVFAQWIQNTHALAPGATAPGATASTSLTWGGGDLVAVGGKVALLPIPLGTADFLVHHIHAFTIHVTVLILLKGVLFARSSRLIPDKANLGFRFPCDGPGRGGTCQVSAWDHVFLGLFWMYNAISVVIFHFSWKMQSDVWGSISDQGVVTHITGGNFAQSSITINGWLRDFLWAQASQVIQSYGSSLSAYGLFFLGAHFVWAFSLMFLFSGRGYWQELIESIVWAHNKLKVAPATQPRALSIVQGRAVGVTHYLLGGIATTWAFFLARIIAVG.

Helical transmembrane passes span 70-93 (VFSA…FHGA), 156-179 (LYCT…FHYH), 195-219 (LNHH…HVSL), 291-309 (IAHH…GHMY), 346-369 (WHAQ…HHMY), 385-411 (LSLF…IFMV), 433-455 (AIIS…LYIH), and 531-549 (FLVH…LILL). Residues Cys573 and Cys582 each contribute to the [4Fe-4S] cluster site. The next 2 helical transmembrane spans lie at 589-610 (HVFL…HFSW) and 664-686 (LSAY…MFLF). A chlorophyll a'-binding site is contributed by His675. 2 residues coordinate chlorophyll a: Met683 and Tyr691. Trp692 provides a ligand contact to phylloquinone. A helical transmembrane segment spans residues 724 to 744 (AVGVTHYLLGGIATTWAFFLA).

Belongs to the PsaA/PsaB family. The PsaA/B heterodimer binds the P700 chlorophyll special pair and subsequent electron acceptors. PSI consists of a core antenna complex that captures photons, and an electron transfer chain that converts photonic excitation into a charge separation. The eukaryotic PSI reaction center is composed of at least 11 subunits. P700 is a chlorophyll a/chlorophyll a' dimer, A0 is one or more chlorophyll a, A1 is one or both phylloquinones and FX is a shared 4Fe-4S iron-sulfur center. is required as a cofactor.

Its subcellular location is the plastid. It is found in the chloroplast thylakoid membrane. It catalyses the reaction reduced [plastocyanin] + hnu + oxidized [2Fe-2S]-[ferredoxin] = oxidized [plastocyanin] + reduced [2Fe-2S]-[ferredoxin]. In terms of biological role, psaA and PsaB bind P700, the primary electron donor of photosystem I (PSI), as well as the electron acceptors A0, A1 and FX. PSI is a plastocyanin-ferredoxin oxidoreductase, converting photonic excitation into a charge separation, which transfers an electron from the donor P700 chlorophyll pair to the spectroscopically characterized acceptors A0, A1, FX, FA and FB in turn. Oxidized P700 is reduced on the lumenal side of the thylakoid membrane by plastocyanin. The sequence is that of Photosystem I P700 chlorophyll a apoprotein A1 from Coffea arabica (Arabian coffee).